Consider the following 818-residue polypeptide: Myosin-A (818 aa).

S19 is subject to Phosphoserine; by PKG. The 675-residue stretch at 97–771 (MSFGDIGLLN…GAKILTKIQR (675 aa)) folds into the Myosin motor domain. 191-198 (GESGAGKT) serves as a coordination point for ATP. An actin-binding region spans residues 661 to 671 (PHFIRCIKPNE). Positions 773-818 (KLVEWENCVSVIEAAILKHKYKQKVNKNIPSLLRVQAHIRKKMVAQ) are tail.

It belongs to the TRAFAC class myosin-kinesin ATPase superfamily. Myosin family. In terms of assembly, component of the glideosome complex composed of GAP50, GAP45, MTIP and MyoA; the complex is formed during the late schizont stage and in merozoites. MyoA, MTIP and GAP45 probably form an initial complex in the cytoplasm which is then recruited to the outer face of the inner membrane complex via the interaction with GAP50. Interacts with ACT1.

The protein resides in the cell membrane. Its function is as follows. Myosins are actin-based motor molecules with ATPase activity. Unconventional myosins serve in intracellular movements. Their highly divergent tails are presumed to bind to membranous compartments, which would be moved relative to actin filaments. This Plasmodium falciparum (isolate 3D7) protein is Myosin-A.